The chain runs to 500 residues: Probable cytosol aminopeptidase (500 aa).

Residues K261 and D266 each contribute to the Mn(2+) site. K273 is a catalytic residue. 3 residues coordinate Mn(2+): D284, D343, and E345. R347 is an active-site residue.

The protein belongs to the peptidase M17 family. The cofactor is Mn(2+).

Its subcellular location is the cytoplasm. The enzyme catalyses Release of an N-terminal amino acid, Xaa-|-Yaa-, in which Xaa is preferably Leu, but may be other amino acids including Pro although not Arg or Lys, and Yaa may be Pro. Amino acid amides and methyl esters are also readily hydrolyzed, but rates on arylamides are exceedingly low.. It catalyses the reaction Release of an N-terminal amino acid, preferentially leucine, but not glutamic or aspartic acids.. Presumably involved in the processing and regular turnover of intracellular proteins. Catalyzes the removal of unsubstituted N-terminal amino acids from various peptides. This chain is Probable cytosol aminopeptidase, found in Wolbachia pipientis wMel.